The following is a 230-amino-acid chain: Cytidylate kinase (230 aa).

10-18 (GFSSTGKST) is a binding site for ATP.

It belongs to the cytidylate kinase family. Type 1 subfamily.

The protein localises to the cytoplasm. The enzyme catalyses CMP + ATP = CDP + ADP. It catalyses the reaction dCMP + ATP = dCDP + ADP. In Flavobacterium johnsoniae (strain ATCC 17061 / DSM 2064 / JCM 8514 / BCRC 14874 / CCUG 350202 / NBRC 14942 / NCIMB 11054 / UW101) (Cytophaga johnsonae), this protein is Cytidylate kinase.